The sequence spans 472 residues: Chromosomal replication initiator protein DnaA (472 aa).

The interval 1–73 (MSNMEQDRWS…LSCWQAELPE (73 aa)) is domain I, interacts with DnaA modulators. Positions 73–128 (EVNRVDLTVRSPVRCAAPAKEAPAPVESRRDEQRPSAERSNGATPVSANHDALGGS) are domain II. Positions 89–124 (APAKEAPAPVESRRDEQRPSAERSNGATPVSANHDA) are disordered. Residues 99-109 (ESRRDEQRPSA) show a composition bias toward basic and acidic residues. Polar residues predominate over residues 110 to 119 (ERSNGATPVS). The tract at residues 129 to 351 (PLDPRLTFAS…GAINRLLAHS (223 aa)) is domain III, AAA+ region. Residues G176, G178, K179, and T180 each coordinate ATP. Residues 352–472 (KLNNQPVTLE…VESLKRQLQE (121 aa)) are domain IV, binds dsDNA.

This sequence belongs to the DnaA family. Oligomerizes as a right-handed, spiral filament on DNA at oriC.

Its subcellular location is the cytoplasm. Functionally, plays an essential role in the initiation and regulation of chromosomal replication. ATP-DnaA binds to the origin of replication (oriC) to initiate formation of the DNA replication initiation complex once per cell cycle. Binds the DnaA box (a 9 base pair repeat at the origin) and separates the double-stranded (ds)DNA. Forms a right-handed helical filament on oriC DNA; dsDNA binds to the exterior of the filament while single-stranded (ss)DNA is stabiized in the filament's interior. The ATP-DnaA-oriC complex binds and stabilizes one strand of the AT-rich DNA unwinding element (DUE), permitting loading of DNA polymerase. After initiation quickly degrades to an ADP-DnaA complex that is not apt for DNA replication. Binds acidic phospholipids. The chain is Chromosomal replication initiator protein DnaA from Rhodopseudomonas palustris (strain TIE-1).